A 310-amino-acid chain; its full sequence is Apolipoprotein E (310 aa).

The N-terminal stretch at 1–18 (MKVLWAALVVTLLAGCQA) is a signal peptide. 4 tandem repeats follow at residues 77–98 (ALME…QQLG), 99–120 (PTAQ…ARLG), 121–142 (ADME…AMMG), and 143–164 (QSTE…KRLL). Residues 77–248 (ALMEETMKEV…RLDEVREQVQ (172 aa)) form an 8 X 22 AA approximate tandem repeats region. Met-140 is subject to Methionine sulfoxide. Phosphoserine is present on Ser-144. An LDL and other lipoprotein receptors binding region spans residues 155–165 (HLRKLRKRLLR). 159 to 162 (LRKR) contacts heparin. Positions 165-186 (RDAEDLQKRLAVYQAGIREGAE) form a repeat. 3 consecutive repeat copies span residues 187–204 (RSVN…EQAA), 205–226 (TVRS…QRLR), and 227–248 (GRLE…EQVQ). A lipid-binding and lipoprotein association region spans residues 203 to 283 (AATVRSLISK…SWFEPLVQDM (81 aa)). Position 222 to 229 (222 to 229 (GQRLRGRL)) interacts with heparin. The interval 259–310 (NQMRLQAEAFHARLKSWFEPLVQDMQQKWAELVEKVQLAVGTSPTSESSEKQ) is homooligomerization. The tract at residues 271–283 (RLKSWFEPLVQDM) is specificity for association with VLDL.

This sequence belongs to the apolipoprotein A1/A4/E family. In terms of assembly, homotetramer. May interact with ABCA1; functionally associated with ABCA1 in the biogenesis of HDLs. May interact with APP/A4 amyloid-beta peptide; the interaction is extremely stable in vitro but its physiological significance is unclear. May interact with MAPT. May interact with MAP2. In the cerebrospinal fluid, interacts with secreted SORL1. Interacts with PMEL; this allows the loading of PMEL luminal fragment on ILVs to induce fibril nucleation. APOE exists as multiple glycosylated and sialylated glycoforms within cells and in plasma. The extent of glycosylation and sialylation are tissue and context specific. In terms of processing, glycated in plasma VLDL. Post-translationally, phosphorylated by FAM20C in the extracellular medium.

The protein localises to the secreted. Its subcellular location is the extracellular space. It localises to the extracellular matrix. It is found in the extracellular vesicle. The protein resides in the endosome. The protein localises to the multivesicular body. Functionally, APOE is an apolipoprotein, a protein associating with lipid particles, that mainly functions in lipoprotein-mediated lipid transport between organs via the plasma and interstitial fluids. APOE is a core component of plasma lipoproteins and is involved in their production, conversion and clearance. Apolipoproteins are amphipathic molecules that interact both with lipids of the lipoprotein particle core and the aqueous environment of the plasma. As such, APOE associates with chylomicrons, chylomicron remnants, very low density lipoproteins (VLDL) and intermediate density lipoproteins (IDL) but shows a preferential binding to high-density lipoproteins (HDL). It also binds a wide range of cellular receptors including the LDL receptor/LDLR, the LDL receptor-related proteins LRP1, LRP2 and LRP8 and the very low-density lipoprotein receptor/VLDLR that mediate the cellular uptake of the APOE-containing lipoprotein particles. Finally, APOE also has a heparin-binding activity and binds heparan-sulfate proteoglycans on the surface of cells, a property that supports the capture and the receptor-mediated uptake of APOE-containing lipoproteins by cells. A main function of APOE is to mediate lipoprotein clearance through the uptake of chylomicrons, VLDLs, and HDLs by hepatocytes. APOE is also involved in the biosynthesis by the liver of VLDLs as well as their uptake by peripheral tissues ensuring the delivery of triglycerides and energy storage in muscle, heart and adipose tissues. By participating in the lipoprotein-mediated distribution of lipids among tissues, APOE plays a critical role in plasma and tissues lipid homeostasis. APOE is also involved in two steps of reverse cholesterol transport, the HDLs-mediated transport of cholesterol from peripheral tissues to the liver, and thereby plays an important role in cholesterol homeostasis. First, it is functionally associated with ABCA1 in the biogenesis of HDLs in tissues. Second, it is enriched in circulating HDLs and mediates their uptake by hepatocytes. APOE also plays an important role in lipid transport in the central nervous system, regulating neuron survival and sprouting. This Tapirus terrestris (Lowland tapir) protein is Apolipoprotein E (APOE).